A 148-amino-acid chain; its full sequence is Deoxyuridine 5'-triphosphate nucleotidohydrolase (148 aa).

Substrate contacts are provided by residues 67–69 (RSG), Asn-80, 84–86 (LID), and Met-94.

It belongs to the dUTPase family. It depends on Mg(2+) as a cofactor.

The enzyme catalyses dUTP + H2O = dUMP + diphosphate + H(+). It participates in pyrimidine metabolism; dUMP biosynthesis; dUMP from dCTP (dUTP route): step 2/2. This enzyme is involved in nucleotide metabolism: it produces dUMP, the immediate precursor of thymidine nucleotides and it decreases the intracellular concentration of dUTP so that uracil cannot be incorporated into DNA. The sequence is that of Deoxyuridine 5'-triphosphate nucleotidohydrolase from Burkholderia mallei (strain NCTC 10247).